The primary structure comprises 645 residues: L-aspartate oxidase, chloroplastic (645 aa).

A chloroplast-targeting transit peptide spans 1–70; sequence MAALMNGFGS…RMRHKVGSIR (70 aa). FAD-binding positions include 92 to 95, Lys-114, 121 to 128, and Asp-292; these read SGVA and NTNYAQGG. Arg-368 functions as the Proton donor/acceptor in the catalytic mechanism. FAD-binding positions include Glu-453 and 469-470; that span reads SL.

It belongs to the FAD-dependent oxidoreductase 2 family. NadB subfamily. The cofactor is FAD.

Its subcellular location is the plastid. The protein resides in the chloroplast. It carries out the reaction L-aspartate + O2 = iminosuccinate + H2O2. It functions in the pathway cofactor biosynthesis; NAD(+) biosynthesis; iminoaspartate from L-aspartate (oxidase route): step 1/1. Catalyzes the oxidation of L-aspartate to iminoaspartate. The polypeptide is L-aspartate oxidase, chloroplastic (Oryza sativa subsp. japonica (Rice)).